We begin with the raw amino-acid sequence, 428 residues long: Histone deacetylase 3 (428 aa).

The histone deacetylase stretch occupies residues 3–316; the sequence is NRTAYFYDPD…WTFETSLLVE (314 aa). The 1D-myo-inositol 1,4,5,6-tetrakisphosphate site is built by H17, G21, and K25. H135 is a catalytic residue. Residues D170, H172, and D259 each coordinate Zn(2+). Position 265 (R265) interacts with 1D-myo-inositol 1,4,5,6-tetrakisphosphate. Residues 381–428 form a disordered region; that stretch reads PSDLLSYERPDEADPEERGSEENFSRPEAANEFYDGDHDHDKESDVEI. Composition is skewed to basic and acidic residues over residues 386–405 and 415–428; these read SYER…ENFS and DGDH…DVEI.

Belongs to the histone deacetylase family. HD type 1 subfamily.

The protein resides in the nucleus. It localises to the chromosome. It is found in the cytoplasm. The protein localises to the cytosol. It catalyses the reaction N(6)-acetyl-L-lysyl-[histone] + H2O = L-lysyl-[histone] + acetate. It carries out the reaction N(6)-acetyl-L-lysyl-[protein] + H2O = L-lysyl-[protein] + acetate. The enzyme catalyses N(6)-(2E)-butenoyl-L-lysyl-[protein] + H2O = (2E)-2-butenoate + L-lysyl-[protein]. The catalysed reaction is N(6)-(2-hydroxyisobutanoyl)-L-lysyl-[protein] + H2O = 2-hydroxy-2-methylpropanoate + L-lysyl-[protein]. It catalyses the reaction N(6)-[(S)-lactoyl]-L-lysyl-[protein] + H2O = (S)-lactate + L-lysyl-[protein]. With respect to regulation, inositol tetraphosphate (1D-myo-inositol 1,4,5,6-tetrakisphosphate) promotes the histone deacetylase activity by acting as an intermolecular glue between hdac3 and N-Cor repressor complex components. Histone deacetylase that catalyzes the deacetylation of lysine residues on the N-terminal part of the core histones (H2A, H2B, H3 and H4), and some other non-histone substrates. Histone deacetylation gives a tag for epigenetic repression and plays an important role in transcriptional regulation, cell cycle progression and developmental events. Histone deacetylases act via the formation of large multiprotein complexes, such as N-Cor repressor complex, which activate the histone deacetylase activity. Participates in the BCL6 transcriptional repressor activity by deacetylating the H3 'Lys-27' (H3K27) on enhancer elements, antagonizing EP300 acetyltransferase activity and repressing proximal gene expression. Also functions as a deacetylase for non-histone targets. In addition to protein deacetylase activity, also acts as a protein-lysine deacylase by recognizing other acyl groups: catalyzes removal of (2E)-butenoyl (crotonyl), lactoyl (lactyl) and 2-hydroxyisobutanoyl (2-hydroxyisobutyryl) acyl groups from lysine residues, leading to protein decrotonylation, delactylation and de-2-hydroxyisobutyrylation, respectively. The chain is Histone deacetylase 3 (hdac3) from Danio rerio (Zebrafish).